Consider the following 369-residue polypeptide: Isocitrate dehydrogenase [NAD] subunit 2, mitochondrial (369 aa).

The N-terminal 15 residues, 1–15 (MLRNTFFRNTSRRFL), are a transit peptide targeting the mitochondrion. Residue Thr-105 is modified to Phosphothreonine. Residues Arg-119, Arg-129, and Arg-150 each coordinate substrate. Phosphothreonine is present on Thr-153. Residue Asp-237 coordinates substrate. Mg(2+)-binding residues include Asp-237, Asp-263, and Asp-267. Phosphothreonine is present on residues Thr-327 and Thr-349.

It belongs to the isocitrate and isopropylmalate dehydrogenases family. Octamer of two non-identical subunits IDH1 and IDH2. It depends on Mg(2+) as a cofactor. Mn(2+) serves as cofactor.

Its subcellular location is the mitochondrion matrix. The catalysed reaction is D-threo-isocitrate + NAD(+) = 2-oxoglutarate + CO2 + NADH. Its activity is regulated as follows. Allosterically regulated by several compounds including AMP, NAD(+), and citrate. In terms of biological role, performs an essential role in the oxidative function of the citric acid cycle. Also binds RNA; specifically to the 5'-untranslated leaders of mitochondrial mRNAs. This is Isocitrate dehydrogenase [NAD] subunit 2, mitochondrial (IDH2) from Saccharomyces cerevisiae (strain ATCC 204508 / S288c) (Baker's yeast).